Here is a 110-residue protein sequence, read N- to C-terminus: Thioredoxin (110 aa).

One can recognise a Thioredoxin domain in the interval 2 to 110; that stretch reads SALLVEIDKD…IDAMIAKHVG (109 aa). An intrachain disulfide couples cysteine 33 to cysteine 36.

Belongs to the thioredoxin family.

In terms of biological role, participates in various redox reactions through the reversible oxidation of its active center dithiol to a disulfide and catalyzes dithiol-disulfide exchange reactions. The polypeptide is Thioredoxin (trxA) (Peptoclostridium acidaminophilum (Eubacterium acidaminophilum)).